A 259-amino-acid polypeptide reads, in one-letter code: 5'-nucleotidase SurE (259 aa).

A divalent metal cation-binding residues include Asp15, Asp16, Ser46, and Asn102.

Belongs to the SurE nucleotidase family. A divalent metal cation is required as a cofactor.

Its subcellular location is the cytoplasm. The enzyme catalyses a ribonucleoside 5'-phosphate + H2O = a ribonucleoside + phosphate. Its function is as follows. Nucleotidase that shows phosphatase activity on nucleoside 5'-monophosphates. The protein is 5'-nucleotidase SurE of Chlorobium luteolum (strain DSM 273 / BCRC 81028 / 2530) (Pelodictyon luteolum).